Here is a 154-residue protein sequence, read N- to C-terminus: Aspartate carbamoyltransferase regulatory chain (154 aa).

Zn(2+)-binding residues include Cys-109, Cys-114, Cys-138, and Cys-141.

Belongs to the PyrI family. Contains catalytic and regulatory chains. The cofactor is Zn(2+).

In terms of biological role, involved in allosteric regulation of aspartate carbamoyltransferase. The chain is Aspartate carbamoyltransferase regulatory chain from Yersinia enterocolitica serotype O:8 / biotype 1B (strain NCTC 13174 / 8081).